We begin with the raw amino-acid sequence, 159 residues long: Protein phosphatase 1 regulatory subunit 17 (159 aa).

Disordered regions lie at residues 1-79 (MSTE…HIPP) and 98-127 (RIPK…PALH). Basic and acidic residues-rich tracts occupy residues 62–73 (SDQKKPRRKDTP) and 111–124 (SDME…KDTP). Phosphothreonine; by PKG/PRKG1 occurs at positions 72 and 123.

Substrate for cGMP-dependent protein kinase. Phosphorylation of Thr-72 and Thr-123 is required for its phosphatase activity. Phosphorylated by PRKG1 isoform alpha. As to expression, expressed in Purkinje cells of the cerebellum, hippocampus, pons, medulla and eye.

Functionally, inhibits phosphatase activities of protein phosphatase 1 (PP1) and protein phosphatase 2A (PP2A) complexes. This Mus musculus (Mouse) protein is Protein phosphatase 1 regulatory subunit 17 (Ppp1r17).